The primary structure comprises 308 residues: Protein translocase subunit SecF (308 aa).

The next 6 helical transmembrane spans lie at 10–30, 129–149, 160–180, 181–201, 241–261, and 264–284; these read LFFAISLAMIIPGLIVMAIFG, LAVSIAALAVIIYITWAFRGV, IIAMIHDVLVVISLVSIGGVL, FGWQVDALFLTALLSVIGFSV, TQLMTVEYMLLAIALFGGITL, and FAIILLVGLFMGTYSSIFIAA.

It belongs to the SecD/SecF family. SecF subfamily. As to quaternary structure, forms a complex with SecD. Part of the essential Sec protein translocation apparatus which comprises SecA, SecYEG and auxiliary proteins SecDF. Other proteins may also be involved.

It is found in the cell membrane. Part of the Sec protein translocase complex. Interacts with the SecYEG preprotein conducting channel. SecDF uses the proton motive force (PMF) to complete protein translocation after the ATP-dependent function of SecA. The protein is Protein translocase subunit SecF of Anaerolinea thermophila (strain DSM 14523 / JCM 11388 / NBRC 100420 / UNI-1).